Here is a 408-residue protein sequence, read N- to C-terminus: Voltage-gated potassium channel subunit beta-1 (408 aa).

Residues threonine 97, tryptophan 98, glutamine 104, and aspartate 126 each coordinate NADP(+). The active-site Proton donor/acceptor is tyrosine 131. Residues asparagine 199, serine 229, arginine 230, glutamine 255, tryptophan 284, serine 285, proline 286, leucine 287, alanine 288, cysteine 289, lysine 295, arginine 305, glycine 364, serine 366, glutamine 370, glutamate 373, and asparagine 374 each contribute to the NADP(+) site.

This sequence belongs to the shaker potassium channel beta subunit family. As to quaternary structure, homotetramer. Interaction with tetrameric potassium channel alpha subunits gives rise to a heterooctamer. Identified in potassium channel complexes containing KCNA1, KCNA2, KCNA4, KCNA5, KCNA6, KCNAB1 and KCNAB2. Part of a complex containing KCNA1, KCNA4 and LGI1; interaction with LGI1 inhibits down-regulation of KCNA1 channel activity. Interacts with the dimer formed by GNB1 and GNG2; this enhances KCNA1 binding. Interacts with SQSTM1. In terms of tissue distribution, expression most abundant in aorta. Also high in left ventricle. Also detected in right ventricle, atrium, brain, skeletal muscle and kidney. Not detected in liver.

Its subcellular location is the cytoplasm. It is found in the membrane. The protein localises to the cell membrane. The catalysed reaction is a primary alcohol + NADP(+) = an aldehyde + NADPH + H(+). The enzyme catalyses a secondary alcohol + NADP(+) = a ketone + NADPH + H(+). Functionally, regulatory subunit of the voltage-gated potassium (Kv) Shaker channels composed of pore-forming and potassium-conducting alpha subunits and of regulatory beta subunits. The beta-1/KCNAB1 cytoplasmic subunit mediates closure of delayed rectifier potassium channels by physically obstructing the pore via its N-terminal domain and increases the speed of channel closure for other family members. Promotes the inactivation of Kv1.1/KCNA1, Kv1.2/KCNA2, Kv1.4/KCNA4, Kv1.5/KCNA5 and Kv1.6/KCNA6 alpha subunit-containing channels. Displays nicotinamide adenine dinucleotide phosphate (NADPH)-dependent aldoketoreductase activity by catalyzing the NADPH-dependent reduction of a variety of endogenous aldehydes and ketones. The binding of NADPH is required for efficient down-regulation of potassium channel activity. Oxidation of the bound NADPH restrains N-terminal domain from blocking the channel, thereby decreasing N-type inactivation of potassium channel activity. This Mustela putorius (European polecat) protein is Voltage-gated potassium channel subunit beta-1 (KCNAB1).